A 222-amino-acid chain; its full sequence is Gamma-glutamylcyclotransferase and putative RNase MJ0434 (222 aa).

The active site involves arginine 75. The RX(4)HXY motif motif lies at 75-82 (RDILIRKY). Residue tyrosine 82 is modified to O-di-AMP-tyrosine.

The protein in the N-terminal section; belongs to the HepT RNase toxin family. In the C-terminal section; belongs to the gamma-glutamylcyclotransferase family. Homodimer, probably forms a complex with cognate antitoxin MJ0435. Post-translationally, modified by cognate antitoxin MJ0435; probably at least 2 successive AMPylation events occur on Tyr-82.

Its function is as follows. Probable toxic component of a putative type VII toxin-antitoxin (TA) system, probably an RNase. Probably neutralized by cognate antitoxin MJ0435. Neutralization may be due to AMPylation by MJ0435. This chain is Gamma-glutamylcyclotransferase and putative RNase MJ0434, found in Methanocaldococcus jannaschii (strain ATCC 43067 / DSM 2661 / JAL-1 / JCM 10045 / NBRC 100440) (Methanococcus jannaschii).